The chain runs to 289 residues: Iodotyrosine deiodinase 1 (289 aa).

A helical membrane pass occupies residues 1–21; the sequence is MYFLTPILVAILCILVVWIFK. The segment covering 47–58 has biased composition (basic and acidic residues); that stretch reads DLKDSSDLHQAE. A disordered region spans residues 47–69; it reads DLKDSSDLHQAEEDADEWQESEE. The span at 59-69 shows a compositional bias: acidic residues; it reads EDADEWQESEE. FMN-binding positions include 100-104, serine 128, and 128-129; these read RRSVR and SG. The 3,5-diiodo-L-tyrosine site is built by alanine 130, glutamate 157, tyrosine 161, and lysine 182. 4 residues coordinate 3-iodo-L-tyrosine: alanine 130, glutamate 157, tyrosine 161, and lysine 182. FMN-binding positions include 237–239 and arginine 279; that span reads TTT.

Belongs to the nitroreductase family. In terms of assembly, homodimer. FMN serves as cofactor.

The protein localises to the cell membrane. The protein resides in the cytoplasmic vesicle membrane. The enzyme catalyses 2 iodide + L-tyrosine + 2 NADP(+) = 3,5-diiodo-L-tyrosine + 2 NADPH + H(+). It catalyses the reaction iodide + L-tyrosine + NADP(+) = 3-iodo-L-tyrosine + NADPH. The catalysed reaction is 3-iodo-L-tyrosine + iodide + NADP(+) = 3,5-diiodo-L-tyrosine + NADPH + H(+). It carries out the reaction L-tyrosine + chloride + NADP(+) = 3-chloro-L-tyrosine + NADPH. The enzyme catalyses bromide + L-tyrosine + NADP(+) = 3-bromo-L-tyrosine + NADPH. In terms of biological role, catalyzes the dehalogenation of halotyrosines such as 3-bromo-L-tyrosine, 3-chloro-L-tyrosine, 3-iodo-L-tyrosine and 3,5-diiodo-L-tyrosine. During thyroid hormone biosynthesis, facilitates iodide salvage by catalysing the oxidative NADPH-dependent deiodination of the halogenated by-products of thyroid hormone production, monoiodotyrosine (L-MIT) and diiodotyrosine (L-DIT). The scavanged iodide can then reenter the hormone-producing pathways. Acts more efficiently on 3-iodo-L-tyrosine than 3,5-diiodo-L-tyrosine. The sequence is that of Iodotyrosine deiodinase 1 (IYD) from Pongo abelii (Sumatran orangutan).